Reading from the N-terminus, the 69-residue chain is FXYD domain-containing ion transport regulator 11 (69 aa).

A signal peptide spans 1 to 22 (MSQLTELVLLTVFLALFSRAEA). Topologically, residues 23-33 (NPFVYNYEALR) are extracellular. The chain crosses the membrane as a helical span at residues 34-54 (IGGLVFTCVLVAGAVTALCWG). The Cytoplasmic segment spans residues 55–69 (QCKPKRKHDDDASKI).

It belongs to the FXYD family. In terms of tissue distribution, detected in adult gill and in larval skin at 2 days post-fertilization (at protein level). In adult gill, strong expression is found in the basal regions of the secondary lamellae.

Its subcellular location is the cell membrane. May modulate the activity of a sodium/potassium-transporting ATPase. This Danio rerio (Zebrafish) protein is FXYD domain-containing ion transport regulator 11.